Consider the following 862-residue polypeptide: Solute carrier family 4 member 11 (862 aa).

Over 1–343 (MSQNEHCQDS…IIGKSKSVGK (343 aa)) the chain is Cytoplasmic. A helical membrane pass occupies residues 344-366 (YVTTTLFLYFACLLPTIAFGSLN). Residues 367-379 (DENTNGAIDVQKT) are Extracellular-facing. The chain crosses the membrane as a helical span at residues 380–393 (IAGQSIGGLLYALF). Residues 394–398 (SGQPL) lie on the Cytoplasmic side of the membrane. A helical transmembrane segment spans residues 399–415 (VILLTTAPLAIYTQVIR). The Extracellular segment spans residues 416 to 428 (VICDDYNLDFNAF). Residues 429–452 (YAWTGLWNSFFLALYAFLNLSLLM) form a helical membrane-spanning segment. The Cytoplasmic segment spans residues 453-460 (NLFKRSTE). The helical transmembrane segment at 461-481 (EIIALFISITFVLDAVKGMVK) threads the bilayer. Residues 482–542 (IFGKYYYGHH…SSPGSTHSGQ (61 aa)) are Extracellular-facing. 2 N-linked (GlcNAc...) asparagine glycosylation sites follow: N511 and N519. Residues 543 to 564 (ATAVLSLLIMLGTLWLGYTLYQ) form a helical membrane-spanning segment. At 565-577 (FKKSPYLHPCVRE) the chain is on the cytoplasmic side. The chain crosses the membrane as a helical span at residues 578 to 599 (TLSDCALPIAVLSFSLIGSYGF). The Extracellular segment spans residues 600 to 627 (QEIEMSKFRYNPSESLFEVAQIHSLSFK). A helical transmembrane segment spans residues 628–645 (AIGSAMGLGFLLSLLFFI). The Cytoplasmic segment spans residues 646–670 (EQNLVAALVNAPENRLVKGTAYHWD). The chain crosses the membrane as a helical span at residues 671 to 691 (LLLLAIINTGLSLFGLPWIHA). The Extracellular segment spans residues 692 to 721 (AYPHSPLHVRALALVEERVENGHIYETIVD). The chain crosses the membrane as a helical span at residues 722–746 (VKETRLTALGASVLVGLSLLLLPFP). At 747-752 (LQWIPK) the chain is on the cytoplasmic side. Residues 753 to 770 (PVLYGLFLYIALTSLDGN) traverse the membrane as a helical segment. The Extracellular segment spans residues 771 to 774 (QLFS). A helical membrane pass occupies residues 775 to 797 (RVALLLKEQTSYPPTHYIRRVPQ). Residues 798 to 802 (RKIHY) are Cytoplasmic-facing. Residues 803-819 (FTGLQILQLLLLCAFGM) traverse the membrane as a helical segment. Residues 820 to 823 (SSLP) are Extracellular-facing. Residues 824-844 (YMKMVFPLIMIAMIPIRYNLL) traverse the membrane as a helical segment. The Cytoplasmic segment spans residues 845 to 862 (PRIIEAKYLDVMDAEHRP).

The protein belongs to the anion exchanger (TC 2.A.31) family. As to quaternary structure, homodimer. Post-translationally, glycosylated. Expressed in the endothelial cells of the cornea. In the inner ear, is located in fibrocytes underlying the stria vascularis. In the kidney, is expressed in the thin descending limb of Henle loop.

The protein localises to the cell membrane. It is found in the basolateral cell membrane. It catalyses the reaction tetrahydroxoborate(in) + 2 Na(+)(in) = tetrahydroxoborate(out) + 2 Na(+)(out). Its function is as follows. Multifunctional transporter with an impact in cell morphology and differentiation. In the presence of borate B(OH)4(-), acts as a voltage-dependent electrogenic Na(+)-coupled B(OH)4(-) cotransporter controlling boron homeostasis. At early stages of stem cell differentiation, participates in synergy with ITGA5-ITGB1 and ITGAV-ITGB3 integrins and BMPR1A to promote cell adhesion and contractility that drives differentiation toward osteogenic commitment while inhibiting adipogenesis. In the absence of B(OH)4(-), acts as a Na(+)-coupled OH(-) or H(+) permeable channel with implications in cellular redox balance. Regulates the oxidative stress response in corneal endothelium by enhancing antioxidant defenses and protecting cells from reactive oxygen species. In response to hypo-osmotic challenge, also acts as water permeable channel at the basolateral cell membrane of corneal endothelial cells and facilitates transendothelial fluid reabsorption in the aqueous humor. In the presence of ammonia, acts as an electrogenic NH3/H(+) cotransporter and may play a role in ammonia transport and reabsorption in renal Henle's loop epithelium. This chain is Solute carrier family 4 member 11 (Slc4a11), found in Mus musculus (Mouse).